The chain runs to 513 residues: Calcium-dependent protein kinase 24 (513 aa).

Positions 1–33 (MQPDPSGSGGDGNANAKAKLAPPPVTAAGGRPV) are disordered. In terms of domain architecture, Protein kinase spans 47–305 (YRIGKKLGQG…AHEVLCHPWI (259 aa)). ATP is bound by residues 53-61 (LGQGQFGTT) and lysine 76. The Proton acceptor role is filled by aspartate 171. The tract at residues 311–341 (APDKPIDSAVLSRLKHFSAMNKLKKMALRVI) is autoinhibitory domain. 4 consecutive EF-hand domains span residues 348–383 (EEIG…VGSE), 384–419 (LTEH…MNKL), 420–455 (EREE…FGLD), and 458–489 (HLED…GNAG). Residues aspartate 361, aspartate 363, serine 365, threonine 367, glutamate 372, aspartate 397, aspartate 399, serine 401, threonine 403, glutamate 408, aspartate 433, aspartate 435, serine 437, glutamate 444, aspartate 467, asparagine 469, aspartate 471, glutamine 473, and glutamate 478 each coordinate Ca(2+).

This sequence belongs to the protein kinase superfamily. Ser/Thr protein kinase family. CDPK subfamily. Expressed in roots.

It is found in the cytoplasm. It catalyses the reaction L-seryl-[protein] + ATP = O-phospho-L-seryl-[protein] + ADP + H(+). The enzyme catalyses L-threonyl-[protein] + ATP = O-phospho-L-threonyl-[protein] + ADP + H(+). Activated by calcium. Autophosphorylation may play an important role in the regulation of the kinase activity. Functionally, may play a role in signal transduction pathways that involve calcium as a second messenger. Possesses calcium-dependent protein kinase activity in vitro. The chain is Calcium-dependent protein kinase 24 from Oryza sativa subsp. japonica (Rice).